Consider the following 562-residue polypeptide: Protein KASH5 (562 aa).

Residues 1 to 521 (MDLPEGPVGG…PQRLRVTRHP (521 aa)) lie on the Cytoplasmic side of the membrane. Residues 125 to 153 (ALTSRQLPSGCPEAEEPANLESFGGEDPR) form a disordered region. The stretch at 164 to 349 (SSLEDLELSN…LEEQLSQTYE (186 aa)) forms a coiled coil. The disordered stretch occupies residues 407 to 481 (ETSEETEFPS…DIPENPPERP (75 aa)). Basic and acidic residues predominate over residues 431–448 (AHPEEGRKEPSMWLTRRE). Residues 522–542 (LIPAPVLGLLLLLLLSVLLLG) form a helical; Anchor for type IV membrane protein membrane-spanning segment. Residues 541–562 (LGPSPPPTWPHLQLCYLQPPPV) are interaction with SUN1. The Perinuclear space portion of the chain corresponds to 543–562 (PSPPPTWPHLQLCYLQPPPV).

Core component the LINC complex which is composed of inner nuclear membrane SUN domain-containing proteins coupled to outer nuclear membrane KASH domain-containing nesprins. SUN and KASH domain-containing proteins seem to bind each other promiscuously; however, differentially expression of LINC complex constituents is giving rise to specific assemblies. At least SUN1/2-containing core LINC complexes are proposed to be hexameric composed of three protomers of each KASH and SUN domain-containing protein. Interacts with SUN1; this interaction mediates its telomere localization by forming a SUN1:KASH5 LINC complex. Component of a probable SUN2:KASH5 LINC complex. Self-associates. Interacts with DYNC1H1, DCTN1, DYNC1I1/2 and PAFAH1B1; suggesting the association with the dynein-dynactin motor complex. As to expression, expressed in testis (at protein level).

The protein localises to the nucleus outer membrane. It is found in the nucleus. Its subcellular location is the chromosome. The protein resides in the telomere. It localises to the nucleus envelope. Functionally, as a component of the LINC (LInker of Nucleoskeleton and Cytoskeleton) complex, involved in the connection between the nuclear lamina and the cytoskeleton. The nucleocytoplasmic interactions established by the LINC complex play an important role in the transmission of mechanical forces across the nuclear envelope and in nuclear movement and positioning. Required for telomere attachment to nuclear envelope in the prophase of meiosis. Required for rapid telomere prophase movements implicating a SUN1/2:KASH5 LINC complex in which SUN1 and SUN2 seem to act at least partial redundantly. Required for homolog pairing during meiotic prophase in spermatocytes and probably oocytes. Essential for male and female gametogenesis. Recruits cytoplasmic dynein to telomere attachment sites at the nuclear envelope in spermatocytes. In oocytes is involved in meiotic resumption and spindle formation. This chain is Protein KASH5, found in Homo sapiens (Human).